Reading from the N-terminus, the 465-residue chain is Cysteine--tRNA ligase (465 aa).

Residue C30 coordinates Zn(2+). The 'HIGH' region signature appears at 32–42 (MTVYDYCHVGH). The Zn(2+) site is built by C214, H239, and E243. The short motif at 271–275 (KMSKS) is the 'KMSKS' region element. K274 provides a ligand contact to ATP.

This sequence belongs to the class-I aminoacyl-tRNA synthetase family. As to quaternary structure, monomer. Requires Zn(2+) as cofactor.

The protein localises to the cytoplasm. It carries out the reaction tRNA(Cys) + L-cysteine + ATP = L-cysteinyl-tRNA(Cys) + AMP + diphosphate. In Ralstonia nicotianae (strain ATCC BAA-1114 / GMI1000) (Ralstonia solanacearum), this protein is Cysteine--tRNA ligase.